A 559-amino-acid chain; its full sequence is CRISPR-associated exonuclease Cas4/endonuclease Cas1 fusion (559 aa).

The tract at residues 1-198 (MAETDGSIPL…RCSLVGICLP (198 aa)) is CRISPR-associated exonuclease Cas4. Cys22 contacts [4Fe-4S] cluster. Positions 87 and 100 each coordinate Mn(2+). The [4Fe-4S] cluster site is built by Cys187, Cys190, and Cys196. A CRISPR-associated endonuclease Cas1 region spans residues 224-559 (LYVQSPKAYV…IPAYPNFVTR (336 aa)). Mn(2+) is bound by residues Glu380, His451, and Glu466.

In the N-terminal section; belongs to the CRISPR-associated exonuclease Cas4 family. It in the C-terminal section; belongs to the CRISPR-associated endonuclease Cas1 family. As to quaternary structure, homodimer, forms a heterotetramer with a Cas2 homodimer. Requires [4Fe-4S] cluster as cofactor. Mg(2+) serves as cofactor. Mn(2+) is required as a cofactor.

It carries out the reaction exonucleolytic cleavage in the 5'- to 3'-direction to yield nucleoside 3'-phosphates.. In terms of biological role, CRISPR (clustered regularly interspaced short palindromic repeat), is an adaptive immune system that provides protection against mobile genetic elements (viruses, transposable elements and conjugative plasmids). CRISPR clusters contain spacers, sequences complementary to antecedent mobile elements, and target invading nucleic acids. CRISPR clusters are transcribed and processed into CRISPR RNA (crRNA). The Cas4 region acts as a ssDNA exonuclease, while the Cas1 region acts as a dsDNA endonuclease. Involved in the integration of spacer DNA into the CRISPR cassette. In Geobacter sulfurreducens (strain ATCC 51573 / DSM 12127 / PCA), this protein is CRISPR-associated exonuclease Cas4/endonuclease Cas1 fusion (cas4-cas1).